Here is a 349-residue protein sequence, read N- to C-terminus: MVQLQVFISGLLLLLPGAVASYTVVQGHSVTLPCIYSTTYRDEMVPTCWGRGECRSSYCTRSLIWTNGYKVTYQRSNRYQLKGNISEGNVSLTIENTVVSDSGPYCCIAEIPGAFYFVDYLLEVKAELPTSPPTRPTNTGRPTTTRPTNTGRPTTTRPTNTGRPTTTERPTTTGRPTTTERPTTTGRPTTISTRSTHVPTSTRVSTSTPPTPEQTQTHRSEATTYYPDQTTAEVTEAPSHTPTDWNNTATSSDDSWNSDTEAIPPQKLQRNPTKGFYVGMSFAALLLLLLASTVAITRYMVMRKNSGSLRFVAFPVSKIGASQNKVVEQARIEDEVYIIEDSPYFEEES.

The N-terminal stretch at 1 to 20 (MVQLQVFISGLLLLLPGAVA) is a signal peptide. Residues 21–275 (SYTVVQGHSV…QKLQRNPTKG (255 aa)) lie on the Extracellular side of the membrane. The Ig-like V-type domain maps to 22 to 123 (YTVVQGHSVT…AFYFVDYLLE (102 aa)). Cystine bridges form between Cys-34/Cys-107, Cys-48/Cys-59, and Cys-54/Cys-106. Residues Asn-84 and Asn-89 are each glycosylated (N-linked (GlcNAc...) asparagine). Residues 128–271 (LPTSPPTRPT…AIPPQKLQRN (144 aa)) are disordered. A compositionally biased stretch (low complexity) spans 136 to 215 (PTNTGRPTTT…TSTPPTPEQT (80 aa)). Residues 222-260 (ATTYYPDQTTAEVTEAPSHTPTDWNNTATSSDDSWNSDT) show a composition bias toward polar residues. The helical transmembrane segment at 276–296 (FYVGMSFAALLLLLLASTVAI) threads the bilayer. The Cytoplasmic portion of the chain corresponds to 297-349 (TRYMVMRKNSGSLRFVAFPVSKIGASQNKVVEQARIEDEVYIIEDSPYFEEES).

The protein belongs to the immunoglobulin superfamily. TIM family. In terms of assembly, homodimer.

The protein localises to the cell membrane. Probable receptor for SEMA4A involved in the regulation of T-cell function. The interaction with SEMA4A enhances T-cell activation. The protein is T-cell immunoglobulin and mucin domain-containing protein 2 (Timd2) of Rattus norvegicus (Rat).